Here is a 352-residue protein sequence, read N- to C-terminus: Ion-translocating oxidoreductase complex subunit D (352 aa).

Helical transmembrane passes span 20–40, 42–62, 89–109, and 123–143; these read IMLL…WFFG, GTLV…ALVL, IPPL…VIIA, and PAMI…TSWL. At Thr187 the chain carries FMN phosphoryl threonine. 5 helical membrane-spanning segments follow: residues 214 to 234, 242 to 262, 267 to 287, 301 to 321, and 322 to 342; these read ILAG…GVWL, WHVP…GWLF, LAAP…FFIL, LIFG…GGYP, and DGVA…DYYT.

Belongs to the NqrB/RnfD family. The complex is composed of six subunits: RsxA, RsxB, RsxC, RsxD, RsxE and RsxG. FMN is required as a cofactor.

It localises to the cell inner membrane. Functionally, part of a membrane-bound complex that couples electron transfer with translocation of ions across the membrane. Required to maintain the reduced state of SoxR. The chain is Ion-translocating oxidoreductase complex subunit D from Escherichia coli (strain UTI89 / UPEC).